A 247-amino-acid chain; its full sequence is 6-carboxyhexanoate--CoA ligase (247 aa).

It belongs to the BioW family. As to quaternary structure, homodimer. It depends on Mg(2+) as a cofactor.

The catalysed reaction is heptanedioate + ATP + CoA = 6-carboxyhexanoyl-CoA + AMP + diphosphate. The protein operates within metabolic intermediate metabolism; pimeloyl-CoA biosynthesis; pimeloyl-CoA from pimelate: step 1/1. Catalyzes the transformation of pimelate into pimeloyl-CoA with concomitant hydrolysis of ATP to AMP. The chain is 6-carboxyhexanoate--CoA ligase from Persephonella marina (strain DSM 14350 / EX-H1).